A 133-amino-acid polypeptide reads, in one-letter code: Large ribosomal subunit protein uL11 (133 aa).

It belongs to the universal ribosomal protein uL11 family. In terms of assembly, part of the ribosomal stalk of the 50S ribosomal subunit. Interacts with L10 and the large rRNA to form the base of the stalk. L10 forms an elongated spine to which 2 L12 dimers bind in a sequential fashion forming a pentameric L10(L12)2(L12)2 complex. One or more lysine residues are methylated.

In terms of biological role, forms part of the ribosomal stalk which helps the ribosome interact with GTP-bound translation factors. The chain is Large ribosomal subunit protein uL11 from Geobacillus stearothermophilus (Bacillus stearothermophilus).